A 254-amino-acid polypeptide reads, in one-letter code: Alcohol dehydrogenase 2 (254 aa).

10-33 (FVAGLGGIGFDTSREIVKSGPKNL) is an NAD(+) binding site. Residue serine 138 coordinates substrate. Tyrosine 151 serves as the catalytic Proton acceptor.

The protein belongs to the short-chain dehydrogenases/reductases (SDR) family. Homodimer.

It catalyses the reaction a primary alcohol + NAD(+) = an aldehyde + NADH + H(+). The enzyme catalyses a secondary alcohol + NAD(+) = a ketone + NADH + H(+). The polypeptide is Alcohol dehydrogenase 2 (Adh2) (Drosophila buzzatii (Fruit fly)).